Reading from the N-terminus, the 161-residue chain is Peptidyl-prolyl cis-trans isomerase-like 1 (161 aa).

Residues 1 to 155 (MATDVAFDTS…DEVKIIRARV (155 aa)) form the PPIase cyclophilin-type domain.

It belongs to the cyclophilin-type PPIase family. PPIL1 subfamily.

It carries out the reaction [protein]-peptidylproline (omega=180) = [protein]-peptidylproline (omega=0). In terms of biological role, PPIases accelerate the folding of proteins. It catalyzes the cis-trans isomerization of proline imidic peptide bonds in oligopeptides. The protein is Peptidyl-prolyl cis-trans isomerase-like 1 (cyp1) of Aspergillus oryzae (strain ATCC 42149 / RIB 40) (Yellow koji mold).